The following is a 118-amino-acid chain: DNA-binding protein Msp_0595 (118 aa).

Low complexity predominate over residues 15–44; the sequence is LKQQQLAAQQQQGASLEQMQQEEQARQQFE. Positions 15-45 are disordered; that stretch reads LKQQQLAAQQQQGASLEQMQQEEQARQQFEN.

It belongs to the PDCD5 family.

This is DNA-binding protein Msp_0595 from Methanosphaera stadtmanae (strain ATCC 43021 / DSM 3091 / JCM 11832 / MCB-3).